Reading from the N-terminus, the 346-residue chain is Uroporphyrinogen decarboxylase (346 aa).

Substrate-binding positions include 26–30 (RQAGR), Asp-76, Tyr-153, Ser-208, and His-323.

This sequence belongs to the uroporphyrinogen decarboxylase family. As to quaternary structure, homodimer.

It is found in the cytoplasm. The catalysed reaction is uroporphyrinogen III + 4 H(+) = coproporphyrinogen III + 4 CO2. It functions in the pathway porphyrin-containing compound metabolism; protoporphyrin-IX biosynthesis; coproporphyrinogen-III from 5-aminolevulinate: step 4/4. Catalyzes the decarboxylation of four acetate groups of uroporphyrinogen-III to yield coproporphyrinogen-III. This Prochlorococcus marinus (strain MIT 9515) protein is Uroporphyrinogen decarboxylase.